The primary structure comprises 120 residues: Ribosome-binding factor A (120 aa).

The protein belongs to the RbfA family. In terms of assembly, monomer. Binds 30S ribosomal subunits, but not 50S ribosomal subunits or 70S ribosomes.

Its subcellular location is the cytoplasm. Its function is as follows. One of several proteins that assist in the late maturation steps of the functional core of the 30S ribosomal subunit. Associates with free 30S ribosomal subunits (but not with 30S subunits that are part of 70S ribosomes or polysomes). Required for efficient processing of 16S rRNA. May interact with the 5'-terminal helix region of 16S rRNA. The polypeptide is Ribosome-binding factor A (Clostridium botulinum (strain 657 / Type Ba4)).